We begin with the raw amino-acid sequence, 100 residues long: Urease subunit gamma (100 aa).

It belongs to the urease gamma subunit family. Heterotrimer of UreA (gamma), UreB (beta) and UreC (alpha) subunits. Three heterotrimers associate to form the active enzyme.

Its subcellular location is the cytoplasm. It catalyses the reaction urea + 2 H2O + H(+) = hydrogencarbonate + 2 NH4(+). It participates in nitrogen metabolism; urea degradation; CO(2) and NH(3) from urea (urease route): step 1/1. The chain is Urease subunit gamma from Cereibacter sphaeroides (strain ATCC 17025 / ATH 2.4.3) (Rhodobacter sphaeroides).